The chain runs to 94 residues: Large ribosomal subunit protein bL25 (94 aa).

It belongs to the bacterial ribosomal protein bL25 family. As to quaternary structure, part of the 50S ribosomal subunit; part of the 5S rRNA/L5/L18/L25 subcomplex. Contacts the 5S rRNA. Binds to the 5S rRNA independently of L5 and L18.

This is one of the proteins that binds to the 5S RNA in the ribosome where it forms part of the central protuberance. The protein is Large ribosomal subunit protein bL25 of Cronobacter sakazakii (strain ATCC BAA-894) (Enterobacter sakazakii).